A 279-amino-acid polypeptide reads, in one-letter code: Phosphonates import ATP-binding protein PhnC (279 aa).

In terms of domain architecture, ABC transporter spans 2–245 (FQLKNVTRQF…AVAAIYGAET (244 aa)). 34 to 41 (GRSGAGKS) serves as a coordination point for ATP.

The protein belongs to the ABC transporter superfamily. Phosphonates importer (TC 3.A.1.9.1) family. In terms of assembly, the complex is composed of two ATP-binding proteins (PhnC), two transmembrane proteins (PhnE) and a solute-binding protein (PhnD).

The protein resides in the cell inner membrane. It carries out the reaction phosphonate(out) + ATP + H2O = phosphonate(in) + ADP + phosphate + H(+). In terms of biological role, part of the ABC transporter complex PhnCDE involved in phosphonates import. Responsible for energy coupling to the transport system. The polypeptide is Phosphonates import ATP-binding protein PhnC (Rhizobium meliloti (strain 1021) (Ensifer meliloti)).